Consider the following 328-residue polypeptide: tRNA uridine(34) hydroxylase (328 aa).

Residues 130-224 (LDKDTVVLDT…YGKDPEVQGE (95 aa)) form the Rhodanese domain. Cysteine 184 acts as the Cysteine persulfide intermediate in catalysis.

The protein belongs to the TrhO family.

The enzyme catalyses uridine(34) in tRNA + AH2 + O2 = 5-hydroxyuridine(34) in tRNA + A + H2O. In terms of biological role, catalyzes oxygen-dependent 5-hydroxyuridine (ho5U) modification at position 34 in tRNAs. This is tRNA uridine(34) hydroxylase from Streptococcus pneumoniae (strain Taiwan19F-14).